Consider the following 312-residue polypeptide: Taste receptor type 2 member 103 (312 aa).

Over 1–6 (MVLTIR) the chain is Extracellular. A helical transmembrane segment spans residues 7–27 (AILWVTLITIISLEFIIGILG). Topologically, residues 28–61 (NVFIALVNIIDWVKRGKISAVDKTYMALAISRTA) are cytoplasmic. Residues 62 to 82 (FLLSLITGFLVSLLDPALLGM) form a helical membrane-spanning segment. Residues 83 to 92 (RTMVRLLTIS) are Extracellular-facing. A helical membrane pass occupies residues 93-113 (WMVTNHFSVWFATCLSIFYFL). Residues 114 to 132 (KIANFSNSIFLVLKWEAKK) are Cytoplasmic-facing. The helical transmembrane segment at 133–153 (VVSVTLVVSVIILIMNIIVIN) threads the bilayer. Residues 154–185 (KFTDRLQVNTLQNCSTSNTLKDYGLFLFISTG) lie on the Extracellular side of the membrane. A glycan (N-linked (GlcNAc...) asparagine) is linked at asparagine 166. Residues 186 to 206 (FTLTPFAVSLTMFLLLIFSLW) form a helical membrane-spanning segment. The Cytoplasmic portion of the chain corresponds to 207–229 (RHLKNMCHSATGSRDVSTVAHIK). A helical membrane pass occupies residues 230–250 (GLQTVVTFLLLYTAFVMSLLS). At 251–264 (ESLNINIQHTNLLS) the chain is on the extracellular side. The helical transmembrane segment at 265–285 (HFLRSIGVAFPTGHSCVLILG) threads the bilayer. Residues 286–312 (NSKLRQASLSVILWLRYKYKHIENWGP) lie on the Cytoplasmic side of the membrane.

This sequence belongs to the G-protein coupled receptor T2R family. In terms of tissue distribution, expressed in subsets of taste receptor cells of the tongue and palate epithelium and exclusively in gustducin-positive cells. Expressed in 15% taste bud cells in circumvallate and foliate papillae but only in 2% in fungiform papillae.

The protein resides in the membrane. In terms of biological role, gustducin-coupled receptor implicated in the perception of bitter compounds in the oral cavity and the gastrointestinal tract. Signals through PLCB2 and the calcium-regulated cation channel TRPM5. The sequence is that of Taste receptor type 2 member 103 (Tas2r103) from Mus musculus (Mouse).